Consider the following 260-residue polypeptide: UPF0246 protein Tola_0968 (260 aa).

Belongs to the UPF0246 family.

This chain is UPF0246 protein Tola_0968, found in Tolumonas auensis (strain DSM 9187 / NBRC 110442 / TA 4).